The primary structure comprises 338 residues: Fructose-1,6-bisphosphatase class 1 (338 aa).

Mg(2+) is bound by residues E92, D115, L117, and D118. Substrate-binding positions include 118-121, N211, Y244, 262-264, and K274; these read DGSS and YLY. E280 provides a ligand contact to Mg(2+).

Belongs to the FBPase class 1 family. In terms of assembly, homotetramer. It depends on Mg(2+) as a cofactor.

The protein resides in the cytoplasm. The catalysed reaction is beta-D-fructose 1,6-bisphosphate + H2O = beta-D-fructose 6-phosphate + phosphate. It participates in carbohydrate biosynthesis; gluconeogenesis. This is Fructose-1,6-bisphosphatase class 1 from Vibrio vulnificus (strain YJ016).